We begin with the raw amino-acid sequence, 332 residues long: Ribosomal RNA small subunit methyltransferase H (332 aa).

Residues 36–38 (GGY), D54, F81, D102, and Q109 each bind S-adenosyl-L-methionine.

The protein belongs to the methyltransferase superfamily. RsmH family.

It localises to the cytoplasm. It catalyses the reaction cytidine(1402) in 16S rRNA + S-adenosyl-L-methionine = N(4)-methylcytidine(1402) in 16S rRNA + S-adenosyl-L-homocysteine + H(+). Its function is as follows. Specifically methylates the N4 position of cytidine in position 1402 (C1402) of 16S rRNA. This chain is Ribosomal RNA small subunit methyltransferase H, found in Nitrobacter winogradskyi (strain ATCC 25391 / DSM 10237 / CIP 104748 / NCIMB 11846 / Nb-255).